Here is a 265-residue protein sequence, read N- to C-terminus: MKALVLTLAVLFFTGSQAQHFWQQDDPQSSWDRVKDFATVYVDAIKDSGRDYVAQFEASALGKQLNLKLLDNWDSLTSTFAKVREQLGPVTQEFWDNLEKETESLRQEMNKDLEEVKQKVQPYLDEFKRKWQEELQIYRQKVAPLGEELREGARQKVQELQDKLTPLAEEMRDRARAHVETLRQQLAPYSDDLRQRMATRFEVLKEGGGSLAEYHAKASEQLKALGEKAKPALEDLRQGLLPVLESLKVSILAAIDEASKKLNAQ.

A signal peptide spans M1–A18. 2 repeat units span residues L67–G88 and P89–N110. The tract at residues L67–Q265 is 10 X approximate tandem repeats. Methionine sulfoxide is present on M109. A 3; half-length repeat occupies K111 to Q121. 5 consecutive repeat copies span residues P122–V142, P144–T165, P166–A187, P188–G209, and S210–K230. One copy of the 9; half-length repeat lies at P231–L241. Repeat 10 spans residues P242–Q265.

It belongs to the apolipoprotein A1/A4/E family. As to quaternary structure, homodimer. Interacts with APOA1BP and CLU. Component of a sperm activating protein complex (SPAP), consisting of APOA1, an immunoglobulin heavy chain, an immunoglobulin light chain and albumin. Interacts with NDRG1. Interacts with SCGB3A2. Interacts with NAXE and YJEFN3. In terms of processing, glycosylated. Post-translationally, palmitoylated. Phosphorylation sites are present in the extracellular medium. As to expression, major protein of plasma HDL, also found in chylomicrons.

It is found in the secreted. Its function is as follows. Participates in the reverse transport of cholesterol from tissues to the liver for excretion by promoting cholesterol efflux from tissues and by acting as a cofactor for the lecithin cholesterol acyltransferase (LCAT). As part of the SPAP complex, activates spermatozoa motility. In Physeter macrocephalus (Sperm whale), this protein is Apolipoprotein A-I (APOA1).